Consider the following 490-residue polypeptide: tRNA-2-methylthio-N(6)-dimethylallyladenosine synthase (490 aa).

The 118-residue stretch at 37 to 154 (KKVYIATQGC…LPELYDKSTT (118 aa)) folds into the MTTase N-terminal domain. The [4Fe-4S] cluster site is built by Cys46, Cys83, Cys117, Cys198, Cys202, and Cys205. The Radical SAM core domain occupies 184–416 (KVEGYRAFVS…QKVIRDSTLK (233 aa)). The TRAM domain occupies 419–487 (EEMVGKTLRV…PHMVRGELVD (69 aa)).

This sequence belongs to the methylthiotransferase family. MiaB subfamily. As to quaternary structure, monomer. [4Fe-4S] cluster serves as cofactor.

The protein resides in the cytoplasm. The catalysed reaction is N(6)-dimethylallyladenosine(37) in tRNA + (sulfur carrier)-SH + AH2 + 2 S-adenosyl-L-methionine = 2-methylsulfanyl-N(6)-dimethylallyladenosine(37) in tRNA + (sulfur carrier)-H + 5'-deoxyadenosine + L-methionine + A + S-adenosyl-L-homocysteine + 2 H(+). In terms of biological role, catalyzes the methylthiolation of N6-(dimethylallyl)adenosine (i(6)A), leading to the formation of 2-methylthio-N6-(dimethylallyl)adenosine (ms(2)i(6)A) at position 37 in tRNAs that read codons beginning with uridine. The polypeptide is tRNA-2-methylthio-N(6)-dimethylallyladenosine synthase (Psychrobacter sp. (strain PRwf-1)).